A 316-amino-acid polypeptide reads, in one-letter code: Malate dehydrogenase 2 (316 aa).

Residues glycine 10–glycine 15 and aspartate 34 each bind NAD(+). 2 residues coordinate substrate: arginine 83 and arginine 89. Residues asparagine 96 and isoleucine 119–asparagine 121 contribute to the NAD(+) site. Residues asparagine 121 and arginine 152 each contribute to the substrate site. Histidine 176 acts as the Proton acceptor in catalysis.

This sequence belongs to the LDH/MDH superfamily. MDH type 3 family.

The catalysed reaction is (S)-malate + NAD(+) = oxaloacetate + NADH + H(+). Catalyzes the reversible oxidation of malate to oxaloacetate. The sequence is that of Malate dehydrogenase 2 from Anaeromyxobacter dehalogenans (strain 2CP-C).